A 468-amino-acid polypeptide reads, in one-letter code: ATP synthase subunit beta (468 aa).

155–162 (GGAGVGKT) is a binding site for ATP.

It belongs to the ATPase alpha/beta chains family. In terms of assembly, F-type ATPases have 2 components, CF(1) - the catalytic core - and CF(0) - the membrane proton channel. CF(1) has five subunits: alpha(3), beta(3), gamma(1), delta(1), epsilon(1). CF(0) has three main subunits: a(1), b(2) and c(9-12). The alpha and beta chains form an alternating ring which encloses part of the gamma chain. CF(1) is attached to CF(0) by a central stalk formed by the gamma and epsilon chains, while a peripheral stalk is formed by the delta and b chains.

It localises to the cell membrane. It carries out the reaction ATP + H2O + 4 H(+)(in) = ADP + phosphate + 5 H(+)(out). Its function is as follows. Produces ATP from ADP in the presence of a proton gradient across the membrane. The catalytic sites are hosted primarily by the beta subunits. The polypeptide is ATP synthase subunit beta (Streptococcus agalactiae serotype III (strain NEM316)).